A 670-amino-acid chain; its full sequence is MELLVVTLTCLGMSLLASNLALVGVVRSYTNETPTPGPETELITTTVARMTDPTAKPSDFPGDAVTGTQPVPREPSSLPRTTPSLAHTTISKMISLGTRPRPTIPGVPTTIPNTDAPVDPGSVHTTARVVTDITTKQTPTTPATPAGANDTANITTATPAGANDTANITTATPAGANDTANITTATPAGANDTAVTTTSATPAGANDTAVTTTPATPAGANDTANGTVVTTTPAMPAGANDTANGTAVTTTPAMPAGANDTANITTATPTGANDTANVTMPAGATDTVVTTTPAMPTGANDTANITTATPAGANDTANVTMPAGATDTVVTTTPAMPAGANDTANVTKPAGSTDTVVTTTPAMPTGATDTVVTTTPAMPTGATDTVVTTTPAMPTGATDTVVTTTPAKPAGANGTVVTTTPAMPAGANDTVVTTAPATPAGANDTANVTKPTGATDTVVTTATVKPTGATGTVTTTTAKPTGANDTANVTKPTGATGTVTTTTAKPTGATGTVTVATAKPTGATGTVTTTTAKPTGANGTVTTTTAKPTGATGTVTTTTAKPTGANGTVTTTTAKPAGANGTVTTTTAKPAGANGTVTTTTAKPAGANGTVTTTTAKPAGANGTVTTTTAKPAGAGHGHGHGHGHGHGHGHGHGGRGPPGGHKPKSGARR.

Residues 53–83 (PTAKPSDFPGDAVTGTQPVPREPSSLPRTTP) are disordered. Repeat copies occupy residues 143 to 158 (ATPAGANDTANITTAT), 171 to 186 (ATPAGANDTANITTAT), 200 to 214 (ATPAGANDTAVTTTP), 215 to 233 (ATPAGANDTANGTVVTTTP), 234 to 252 (AMPAGANDTANGTAVTTTP), 253 to 268 (AMPAGANDTANITTAT), 279 to 293 (TMPAGATDTVVTTTP), 294 to 309 (AMPTGANDTANITTAT), 320 to 334 (TMPAGATDTVVTTTP), 335 to 349 (AMPAGANDTANVTKP), 362 to 376 (AMPTGATDTVVTTTP), 377 to 391 (AMPTGATDTVVTTTP), 392 to 406 (AMPTGATDTVVTTTP), 407 to 421 (AKPAGANGTVVTTTP), 422 to 436 (AMPAGANDTVVTTAP), 437 to 452 (ATPAGANDTANVTKPT), 464 to 477 (VKPTGATGTVTTTT), 478 to 493 (AKPTGANDTANVTKPT), 504 to 517 (AKPTGATGTVTVAT), 518 to 531 (AKPTGATGTVTTTT), 532 to 545 (AKPTGANGTVTTTT), 546 to 559 (AKPTGATGTVTTTT), 560 to 573 (AKPTGANGTVTTTT), 574 to 587 (AKPAGANGTVTTTT), 588 to 601 (AKPAGANGTVTTTT), 602 to 615 (AKPAGANGTVTTTT), and 616 to 629 (AKPAGANGTVTTTT). The segment at 187-225 (PAGANDTAVTTTSATPAGANDTAVTTTPATPAGANDTAN) is disordered. A compositionally biased stretch (low complexity) spans 205-225 (ANDTAVTTTPATPAGANDTAN). The disordered stretch occupies residues 339 to 395 (GANDTANVTKPAGSTDTVVTTTPAMPTGATDTVVTTTPAMPTGATDTVVTTTPAMPT). Positions 342 to 362 (DTANVTKPAGSTDTVVTTTPA) are enriched in polar residues. A compositionally biased stretch (low complexity) spans 363–395 (MPTGATDTVVTTTPAMPTGATDTVVTTTPAMPT). Low complexity-rich tracts occupy residues 471–482 (GTVTTTTAKPTG) and 490–503 (TKPTGATGTVTTTT). A disordered region spans residues 471-503 (GTVTTTTAKPTGANDTANVTKPTGATGTVTTTT). Residues 525–634 (GTVTTTTAKP…VTTTTAKPAG (110 aa)) show a composition bias toward low complexity. The interval 525-670 (GTVTTTTAKP…GHKPKSGARR (146 aa)) is disordered. The segment covering 638–654 (GHGHGHGHGHGHGHGHG) has biased composition (basic residues).

This is an uncharacterized protein from Ictalurid herpesvirus 1 (strain Auburn) (IcHV-1).